Here is a 283-residue protein sequence, read N- to C-terminus: Elongation factor Ts (283 aa).

The segment at 79 to 82 (TDFV) is involved in Mg(2+) ion dislocation from EF-Tu.

The protein belongs to the EF-Ts family.

It is found in the cytoplasm. Associates with the EF-Tu.GDP complex and induces the exchange of GDP to GTP. It remains bound to the aminoacyl-tRNA.EF-Tu.GTP complex up to the GTP hydrolysis stage on the ribosome. The polypeptide is Elongation factor Ts (Shewanella oneidensis (strain ATCC 700550 / JCM 31522 / CIP 106686 / LMG 19005 / NCIMB 14063 / MR-1)).